Consider the following 242-residue polypeptide: Small ribosomal subunit protein uS3 (242 aa).

The region spanning 39–109 (IRQYVKATLA…QIRINVVEVT (71 aa)) is the KH type-2 domain. The interval 220–242 (KVNQPKRRQQKRRQQYDDRSNEG) is disordered. The span at 223-232 (QPKRRQQKRR) shows a compositional bias: basic residues. Basic and acidic residues predominate over residues 233–242 (QQYDDRSNEG).

The protein belongs to the universal ribosomal protein uS3 family. In terms of assembly, part of the 30S ribosomal subunit. Forms a tight complex with proteins S10 and S14.

Its function is as follows. Binds the lower part of the 30S subunit head. Binds mRNA in the 70S ribosome, positioning it for translation. This Trichodesmium erythraeum (strain IMS101) protein is Small ribosomal subunit protein uS3.